The sequence spans 373 residues: MRVIIAGGGTGGHIYPALAIAEGIKRRHPDADLLYVGTSRGLETEIVPRTGLPFHAIPAAGLKRGLSPTNLAAVLRAGRGLGASLSLMRRFRPQVVVGTGGYVCGPVVLAAALRGIKTLIHEQNALPGLTNRMLSRYASRTAVTFVEAAGHFPARARIILTGLPVRPEILNTRREQARRHLGIPDHAFVLLSFGGSRGARSLNQAMIPVVQAFREHPGVRLFHATGTAGYDEFAPLLKGTGSTAKAPGNIVVAPYFHEIAALLGAADLVICRSGASTIAELTALGLPSILVPYPFATGNHQEYNARALSERGAAVLILDRELTGQGLLAAVAALWNDPRKLAAMRQASKALGKPRALDSILDIIEKLAGKGTR.

UDP-N-acetyl-alpha-D-glucosamine-binding positions include 10–12 (TGG), asparagine 124, arginine 166, serine 196, and glutamine 301.

It belongs to the glycosyltransferase 28 family. MurG subfamily.

It localises to the cell membrane. The enzyme catalyses di-trans,octa-cis-undecaprenyl diphospho-N-acetyl-alpha-D-muramoyl-L-alanyl-D-glutamyl-meso-2,6-diaminopimeloyl-D-alanyl-D-alanine + UDP-N-acetyl-alpha-D-glucosamine = di-trans,octa-cis-undecaprenyl diphospho-[N-acetyl-alpha-D-glucosaminyl-(1-&gt;4)]-N-acetyl-alpha-D-muramoyl-L-alanyl-D-glutamyl-meso-2,6-diaminopimeloyl-D-alanyl-D-alanine + UDP + H(+). It functions in the pathway cell wall biogenesis; peptidoglycan biosynthesis. Functionally, cell wall formation. Catalyzes the transfer of a GlcNAc subunit on undecaprenyl-pyrophosphoryl-MurNAc-pentapeptide (lipid intermediate I) to form undecaprenyl-pyrophosphoryl-MurNAc-(pentapeptide)GlcNAc (lipid intermediate II). This Desulforudis audaxviator (strain MP104C) protein is UDP-N-acetylglucosamine--N-acetylmuramyl-(pentapeptide) pyrophosphoryl-undecaprenol N-acetylglucosamine transferase.